We begin with the raw amino-acid sequence, 353 residues long: Nicotinate-nucleotide--dimethylbenzimidazole phosphoribosyltransferase (353 aa).

Residue Glu318 is the Proton acceptor of the active site.

The protein belongs to the CobT family.

The enzyme catalyses 5,6-dimethylbenzimidazole + nicotinate beta-D-ribonucleotide = alpha-ribazole 5'-phosphate + nicotinate + H(+). It functions in the pathway nucleoside biosynthesis; alpha-ribazole biosynthesis; alpha-ribazole from 5,6-dimethylbenzimidazole: step 1/2. Catalyzes the synthesis of alpha-ribazole-5'-phosphate from nicotinate mononucleotide (NAMN) and 5,6-dimethylbenzimidazole (DMB). In Chloroflexus aggregans (strain MD-66 / DSM 9485), this protein is Nicotinate-nucleotide--dimethylbenzimidazole phosphoribosyltransferase.